Here is a 182-residue protein sequence, read N- to C-terminus: ATP synthase subunit delta (182 aa).

It belongs to the ATPase delta chain family. In terms of assembly, F-type ATPases have 2 components, F(1) - the catalytic core - and F(0) - the membrane proton channel. F(1) has five subunits: alpha(3), beta(3), gamma(1), delta(1), epsilon(1). CF(0) has four main subunits: a(1), b(1), b'(1) and c(10-14). The alpha and beta chains form an alternating ring which encloses part of the gamma chain. F(1) is attached to F(0) by a central stalk formed by the gamma and epsilon chains, while a peripheral stalk is formed by the delta, b and b' chains.

The protein localises to the cellular thylakoid membrane. F(1)F(0) ATP synthase produces ATP from ADP in the presence of a proton or sodium gradient. F-type ATPases consist of two structural domains, F(1) containing the extramembraneous catalytic core and F(0) containing the membrane proton channel, linked together by a central stalk and a peripheral stalk. During catalysis, ATP synthesis in the catalytic domain of F(1) is coupled via a rotary mechanism of the central stalk subunits to proton translocation. Functionally, this protein is part of the stalk that links CF(0) to CF(1). It either transmits conformational changes from CF(0) to CF(1) or is implicated in proton conduction. This Synechococcus sp. (strain CC9311) protein is ATP synthase subunit delta.